The sequence spans 55 residues: Large ribosomal subunit protein bL33 (55 aa).

The protein belongs to the bacterial ribosomal protein bL33 family.

The sequence is that of Large ribosomal subunit protein bL33 from Erythrobacter litoralis (strain HTCC2594).